A 255-amino-acid polypeptide reads, in one-letter code: Superoxide dismutase [Fe] 2, chloroplastic (255 aa).

The transit peptide at 1–32 (MAAFASALRVLPSPPAAVPRRLRSREQRQGCR) directs the protein to the chloroplast. Fe cation-binding residues include histidine 67, histidine 119, aspartate 203, and histidine 207.

This sequence belongs to the iron/manganese superoxide dismutase family. Homodimer. The cofactor is Fe cation. In terms of tissue distribution, strongly expressed in the stems of the young seedlings, etiolated seedlings and embryogenic calli, but only minimally expressed in the leaves and the roots.

The protein localises to the plastid. It is found in the chloroplast. It catalyses the reaction 2 superoxide + 2 H(+) = H2O2 + O2. Destroys superoxide anion radicals which are normally produced within the cells and which are toxic to biological systems. The protein is Superoxide dismutase [Fe] 2, chloroplastic of Oryza sativa subsp. japonica (Rice).